The following is a 528-amino-acid chain: Major facilitator-type transporter psiT2 (528 aa).

A disordered region spans residues 1–20; the sequence is MSPERSASLEPDEHSSLLSD. Transmembrane regions (helical) follow at residues 87–107, 125–145, 148–168, 174–194, and 220–240; these read FYSGLIESVFACGEVCSIFML, LGVALFTALFGLSTSFTMMLV, VCAGLLAGATPIVHSVVSELT, ALVVPLYGLITPIGFAIGPLI, and FLPSFVPCCLAVVGVTFGYFF. Residues 260–270 are compositionally biased toward low complexity; it reads STSSISSRTST. The segment at 260–299 is disordered; that stretch reads STSSISSRTSTLYGATDDHNRDASESTALSPEEAEDEIDS. The next 6 membrane-spanning stretches (helical) occupy residues 322 to 342, 357 to 377, 388 to 408, 424 to 444, 460 to 479, and 493 to 513; these read FLMFLYTSSDVLFSLYCFTAV, AFSVAGVIAMLMQLCITPWVL, FCMFSFPLVFALMGCLNPLAQ, GLLYAAIAVLLLLARVCVMAF, LATANGLVQVSMTIARALCP, and NILGGHLWVLIMVTISLAGVW.

It belongs to the major facilitator superfamily. TCR/Tet family.

The protein resides in the membrane. Its function is as follows. Major facilitator-type transporter; part of the gene cluster that mediates the biosynthesis of psilocybin, a psychotropic tryptamine-derived natural product. This Psilocybe cyanescens protein is Major facilitator-type transporter psiT2.